A 338-amino-acid chain; its full sequence is Phosphatidylglycerol--prolipoprotein diacylglyceryl transferase (338 aa).

4 helical membrane-spanning segments follow: residues 24–44 (WYGLMYLVAFGIAYFLFSYQV), 67–87 (LFIWGILGLILGARIFGTLVY), 115–135 (GFQGMSYHGGFIGGFLGVILW), and 141–161 (FKFAAVADLMAVSIPLGYTFG). Residue Arg162 participates in a 1,2-diacyl-sn-glycero-3-phospho-(1'-sn-glycerol) binding. The next 3 helical transmembrane spans lie at 224 to 244 (PSQLYEAFFEGIILWLILWLL), 252 to 272 (GFLVCVYTLGYGFFRFFIEYF), and 304 to 324 (GQILCSLMILASLAAMLILYL).

It belongs to the Lgt family.

The protein resides in the cell inner membrane. It carries out the reaction L-cysteinyl-[prolipoprotein] + a 1,2-diacyl-sn-glycero-3-phospho-(1'-sn-glycerol) = an S-1,2-diacyl-sn-glyceryl-L-cysteinyl-[prolipoprotein] + sn-glycerol 1-phosphate + H(+). Its pathway is protein modification; lipoprotein biosynthesis (diacylglyceryl transfer). Functionally, catalyzes the transfer of the diacylglyceryl group from phosphatidylglycerol to the sulfhydryl group of the N-terminal cysteine of a prolipoprotein, the first step in the formation of mature lipoproteins. This Treponema denticola (strain ATCC 35405 / DSM 14222 / CIP 103919 / JCM 8153 / KCTC 15104) protein is Phosphatidylglycerol--prolipoprotein diacylglyceryl transferase.